We begin with the raw amino-acid sequence, 716 residues long: ATP-dependent DNA helicase DinG (716 aa).

A Helicase ATP-binding domain is found at 17 to 294; that stretch reads ALQEQIPDFI…TCMEQFRPKT (278 aa). Residue 54 to 61 participates in ATP binding; sequence APTGVGKT. Cys-120 provides a ligand contact to [4Fe-4S] cluster. The short motif at 131-134 is the DEAH box element; that stretch reads EPTQ. Positions 194, 199, and 205 each coordinate [4Fe-4S] cluster. Residues 248–251 carry the DEAH box motif; it reads DEGH. In terms of domain architecture, Helicase C-terminal spans 517–698; that stretch reads HIAEMAAFFR…VFPIEQPEVP (182 aa).

It belongs to the helicase family. DinG subfamily. Type 1 sub-subfamily. The cofactor is [4Fe-4S] cluster.

The catalysed reaction is Couples ATP hydrolysis with the unwinding of duplex DNA at the replication fork by translocating in the 5'-3' direction. This creates two antiparallel DNA single strands (ssDNA). The leading ssDNA polymer is the template for DNA polymerase III holoenzyme which synthesizes a continuous strand.. It catalyses the reaction ATP + H2O = ADP + phosphate + H(+). DNA-dependent ATPase and 5'-3' DNA helicase. Unwinds D-loops, R-loops, forked DNA and G-quadruplex DNA. The chain is ATP-dependent DNA helicase DinG from Escherichia coli O157:H7.